Here is a 432-residue protein sequence, read N- to C-terminus: Serine hydroxymethyltransferase (432 aa).

(6S)-5,6,7,8-tetrahydrofolate-binding positions include L127 and 131–133; that span reads GHL. Residue K236 is modified to N6-(pyridoxal phosphate)lysine.

Belongs to the SHMT family. As to quaternary structure, homodimer. Requires pyridoxal 5'-phosphate as cofactor.

The protein resides in the cytoplasm. It carries out the reaction (6R)-5,10-methylene-5,6,7,8-tetrahydrofolate + glycine + H2O = (6S)-5,6,7,8-tetrahydrofolate + L-serine. It participates in one-carbon metabolism; tetrahydrofolate interconversion. The protein operates within amino-acid biosynthesis; glycine biosynthesis; glycine from L-serine: step 1/1. Catalyzes the reversible interconversion of serine and glycine with tetrahydrofolate (THF) serving as the one-carbon carrier. This reaction serves as the major source of one-carbon groups required for the biosynthesis of purines, thymidylate, methionine, and other important biomolecules. Also exhibits THF-independent aldolase activity toward beta-hydroxyamino acids, producing glycine and aldehydes, via a retro-aldol mechanism. The protein is Serine hydroxymethyltransferase of Rhizobium johnstonii (strain DSM 114642 / LMG 32736 / 3841) (Rhizobium leguminosarum bv. viciae).